We begin with the raw amino-acid sequence, 326 residues long: Isopenicillin N synthase (326 aa).

Isopenicillin N-binding residues include Arg84, Tyr88, and Tyr186. N-[(5S)-5-amino-5-carboxypentanoyl]-L-cysteinyl-D-valine contacts are provided by Arg84, Tyr88, Tyr186, His209, and Asp211. A Fe2OG dioxygenase domain is found at 183–283 (LIRYPFLENY…RLSIPFFANL (101 aa)). Residues His209, Asp211, and His265 each coordinate Fe(2+). Arg274 provides a ligand contact to 2-oxoglutarate. Ser276 contacts isopenicillin N. Ser276 is an N-[(5S)-5-amino-5-carboxypentanoyl]-L-cysteinyl-D-valine binding site.

The protein belongs to the iron/ascorbate-dependent oxidoreductase family. Fe cation is required as a cofactor. L-ascorbate serves as cofactor.

The enzyme catalyses N-[(5S)-5-amino-5-carboxypentanoyl]-L-cysteinyl-D-valine + O2 = isopenicillin N + 2 H2O. Its pathway is antibiotic biosynthesis; penicillin G biosynthesis; penicillin G from L-alpha-aminoadipate and L-cysteine and L-valine: step 2/3. Functionally, removes, in the presence of oxygen, 4 hydrogen atoms from delta-L-(alpha-aminoadipyl)-L-cysteinyl-D-valine (ACV) to form the azetidinone and thiazolidine rings of isopenicillin. This chain is Isopenicillin N synthase (pcbC), found in Lysobacter lactamgenus.